Consider the following 848-residue polypeptide: Translation initiation factor IF-2 (848 aa).

The interval 1-20 is disordered; the sequence is MNESKGAVDSGLMSGKTERT. The 171-residue stretch at 346–516 folds into the tr-type G domain; that stretch reads PRAPVVTVMG…LLMAELLELK (171 aa). The tract at residues 355–362 is G1; the sequence is GHVDHGKT. 355 to 362 is a binding site for GTP; that stretch reads GHVDHGKT. Positions 380 to 384 are G2; the sequence is GITQH. The tract at residues 402–405 is G3; it reads DTPG. GTP is bound by residues 402–406 and 456–459; these read DTPGH and NKID. The interval 456–459 is G4; the sequence is NKID. A G5 region spans residues 492–494; sequence SAK.

The protein belongs to the TRAFAC class translation factor GTPase superfamily. Classic translation factor GTPase family. IF-2 subfamily.

The protein resides in the cytoplasm. Its function is as follows. One of the essential components for the initiation of protein synthesis. Protects formylmethionyl-tRNA from spontaneous hydrolysis and promotes its binding to the 30S ribosomal subunits. Also involved in the hydrolysis of GTP during the formation of the 70S ribosomal complex. In Ehrlichia canis (strain Jake), this protein is Translation initiation factor IF-2.